Reading from the N-terminus, the 536-residue chain is Fanconi anemia group E protein (536 aa).

Residues 150-371 form an interaction with FANCC region; sequence MEGASPLSER…VLTRSLFLGR (222 aa). The interval 171–252 is disordered; sequence LGLGGRRLKS…ADGGSASPIK (82 aa). The span at 230 to 239 shows a compositional bias: basic and acidic residues; it reads EKERPEHKSL. S249 is subject to Phosphoserine. T346 carries the phosphothreonine; by CHEK1 modification. Phosphoserine; by CHEK1 is present on S374.

In terms of assembly, belongs to the multisubunit FA complex composed of FANCA, FANCB, FANCC, FANCE, FANCF, FANCG, FANCL/PHF9 and FANCM. The complex is not found in FA patients. Interacts with FANCC and FANCD2. Phosphorylated. Phosphorylation by CHEK1 at Thr-346 and Ser-374 regulates its function in DNA cross-links repair. Post-translationally, ubiquitinated. Phosphorylation by CHEK1 induces polyubiquitination and degradation.

The protein resides in the nucleus. In terms of biological role, as part of the Fanconi anemia (FA) complex functions in DNA cross-links repair. Required for the nuclear accumulation of FANCC and provides a critical bridge between the FA complex and FANCD2. This chain is Fanconi anemia group E protein (FANCE), found in Homo sapiens (Human).